A 391-amino-acid chain; its full sequence is NADH-quinone oxidoreductase subunit D (391 aa).

This sequence belongs to the complex I 49 kDa subunit family. As to quaternary structure, NDH-1 is composed of 14 different subunits. Subunits NuoB, C, D, E, F, and G constitute the peripheral sector of the complex.

The protein resides in the cell inner membrane. It catalyses the reaction a quinone + NADH + 5 H(+)(in) = a quinol + NAD(+) + 4 H(+)(out). NDH-1 shuttles electrons from NADH, via FMN and iron-sulfur (Fe-S) centers, to quinones in the respiratory chain. The immediate electron acceptor for the enzyme in this species is believed to be ubiquinone. Couples the redox reaction to proton translocation (for every two electrons transferred, four hydrogen ions are translocated across the cytoplasmic membrane), and thus conserves the redox energy in a proton gradient. In Rickettsia felis (strain ATCC VR-1525 / URRWXCal2) (Rickettsia azadi), this protein is NADH-quinone oxidoreductase subunit D.